The following is a 487-amino-acid chain: MDQEESHVISIFETLGAYFINIFYNFLYKNALYKKHSIVTEYQYQVKGYILGVKQNKKLYEKMLDSFYKYFCNITQINSKTLNFSNFVSTIVDSFIPKEYSQSISLEKKESILELLLCDYISNLGTFITTEKMLPFIIKNRKENYHKVTKEMQDYSLTFLLKKRMELYNKFLRKQAYVEPETELEETYARLSSYNRSLLHQIEELTSEKKSLLADLSTLRKKYEKRQSEYRRLVQLLYQQIQRSSTSKSSYPLTKFIETLPSEHFSNEEYQKETPADQKEVVETELLRKQELLTSQELTSKSPNNYPVPHSRTIVSKPSDNYPVPRSRTTKLDFDNSLQNQELHTKNGFSEKDIVEFSQDKPVFKQDKPEEENILANNQDNPEEEDILAIKQDKPEEEDILAIKQDKPEEEDILEFNQDKPEFKEAVLDIKENILEEENQDEPIVQNPFLENFWKPEQKTFNQSGLFEESSYFSNDWSGGDVTLNFS.

A helical transmembrane segment spans residues 7–28; sequence HVISIFETLGAYFINIFYNFLY. N-linked (GlcNAc...) asparagine; by host glycosylation is found at N73, N83, and N195. Residues 196-235 are a coiled coil; the sequence is RSLLHQIEELTSEKKSLLADLSTLRKKYEKRQSEYRRLVQ. The segment covering 294 to 305 has biased composition (polar residues); sequence TSQELTSKSPNN. The disordered stretch occupies residues 294–324; it reads TSQELTSKSPNNYPVPHSRTIVSKPSDNYPV. An N-linked (GlcNAc...) asparagine; by host glycan is attached at N462.

It belongs to the asfivirus B475L family.

Its subcellular location is the host membrane. This is an uncharacterized protein from African swine fever virus (isolate Tick/South Africa/Pretoriuskop Pr4/1996) (ASFV).